The sequence spans 635 residues: Surface protein F (635 aa).

The signal sequence occupies residues 1–37 (MAKYRGKPFQLYVKLSCSTMMATSIILTNILPYDAQA). Composition is skewed to basic and acidic residues over residues 101–112 (NELDSKDNKSSH) and 193–202 (KSKDASKDTS). Disordered regions lie at residues 101–122 (NELD…SDID) and 192–228 (HKSK…SGHV). The LPXTG sorting signal signature appears at 597–601 (LPKAG). At Ala-600 the chain carries Pentaglycyl murein peptidoglycan amidated alanine. The propeptide at 601–635 (GETIKEHWLPISVIVGAMGVLMIWLSRRNKLKNKA) is removed by sortase.

The protein resides in the secreted. It localises to the cell wall. The sequence is that of Surface protein F from Staphylococcus aureus (strain NCTC 8325 / PS 47).